The primary structure comprises 458 residues: UPF0210 protein Mevan_0738 (458 aa).

Belongs to the UPF0210 family.

The sequence is that of UPF0210 protein Mevan_0738 from Methanococcus vannielii (strain ATCC 35089 / DSM 1224 / JCM 13029 / OCM 148 / SB).